The chain runs to 327 residues: Pantothenate kinase (327 aa).

Position 105-112 (105-112 (GSVAVGKS)) interacts with ATP.

The protein belongs to the prokaryotic pantothenate kinase family.

The protein resides in the cytoplasm. It carries out the reaction (R)-pantothenate + ATP = (R)-4'-phosphopantothenate + ADP + H(+). It functions in the pathway cofactor biosynthesis; coenzyme A biosynthesis; CoA from (R)-pantothenate: step 1/5. The protein is Pantothenate kinase of Cutibacterium acnes (strain DSM 16379 / KPA171202) (Propionibacterium acnes).